Here is a 434-residue protein sequence, read N- to C-terminus: V-type ATP synthase beta chain (434 aa).

This sequence belongs to the ATPase alpha/beta chains family.

Functionally, produces ATP from ADP in the presence of a proton gradient across the membrane. The V-type beta chain is a regulatory subunit. The chain is V-type ATP synthase beta chain from Borreliella afzelii (strain PKo) (Borrelia afzelii).